The following is a 210-amino-acid chain: Thymidylate kinase (210 aa).

An ATP-binding site is contributed by 9–16; that stretch reads GLEGAGKS.

The protein belongs to the thymidylate kinase family.

The catalysed reaction is dTMP + ATP = dTDP + ADP. Its function is as follows. Phosphorylation of dTMP to form dTDP in both de novo and salvage pathways of dTTP synthesis. In Aliivibrio salmonicida (strain LFI1238) (Vibrio salmonicida (strain LFI1238)), this protein is Thymidylate kinase.